Consider the following 208-residue polypeptide: Uracil phosphoribosyltransferase (208 aa).

5-phospho-alpha-D-ribose 1-diphosphate is bound by residues R78, R103, and D130 to S138. Residues I193 and G198–A200 contribute to the uracil site. D199 is a binding site for 5-phospho-alpha-D-ribose 1-diphosphate.

The protein belongs to the UPRTase family. Mg(2+) serves as cofactor.

The catalysed reaction is UMP + diphosphate = 5-phospho-alpha-D-ribose 1-diphosphate + uracil. It participates in pyrimidine metabolism; UMP biosynthesis via salvage pathway; UMP from uracil: step 1/1. Allosterically activated by GTP. Catalyzes the conversion of uracil and 5-phospho-alpha-D-ribose 1-diphosphate (PRPP) to UMP and diphosphate. This Shewanella sediminis (strain HAW-EB3) protein is Uracil phosphoribosyltransferase.